Here is a 1022-residue protein sequence, read N- to C-terminus: Protein translocase subunit SecA (1022 aa).

ATP contacts are provided by residues glutamine 143, 161–165 (GEGKT), and aspartate 661. The disordered stretch occupies residues 973-1001 (AGSILSHESDVPSGTAAQQPIKADVKPGR). Zn(2+) is bound by residues cysteine 1005, cysteine 1007, cysteine 1016, and histidine 1017.

It belongs to the SecA family. As to quaternary structure, monomer and homodimer. Part of the essential Sec protein translocation apparatus which comprises SecA, SecYEG and auxiliary proteins SecDF. Other proteins may also be involved. Requires Zn(2+) as cofactor.

The protein resides in the cell inner membrane. It is found in the cytoplasm. The catalysed reaction is ATP + H2O + cellular proteinSide 1 = ADP + phosphate + cellular proteinSide 2.. Its function is as follows. Part of the Sec protein translocase complex. Interacts with the SecYEG preprotein conducting channel. Has a central role in coupling the hydrolysis of ATP to the transfer of proteins into and across the cell membrane, serving as an ATP-driven molecular motor driving the stepwise translocation of polypeptide chains across the membrane. This chain is Protein translocase subunit SecA, found in Chlorobium phaeobacteroides (strain DSM 266 / SMG 266 / 2430).